A 38-amino-acid polypeptide reads, in one-letter code: Photosystem II reaction center protein L (38 aa).

A helical transmembrane segment spans residues 17–37; that stretch reads SLFWGLLLIFVLAVLFSSYFF.

Belongs to the PsbL family. As to quaternary structure, PSII is composed of 1 copy each of membrane proteins PsbA, PsbB, PsbC, PsbD, PsbE, PsbF, PsbH, PsbI, PsbJ, PsbK, PsbL, PsbM, PsbT, PsbY, PsbZ, Psb30/Ycf12, at least 3 peripheral proteins of the oxygen-evolving complex and a large number of cofactors. It forms dimeric complexes.

Its subcellular location is the plastid. It localises to the chloroplast thylakoid membrane. In terms of biological role, one of the components of the core complex of photosystem II (PSII). PSII is a light-driven water:plastoquinone oxidoreductase that uses light energy to abstract electrons from H(2)O, generating O(2) and a proton gradient subsequently used for ATP formation. It consists of a core antenna complex that captures photons, and an electron transfer chain that converts photonic excitation into a charge separation. This subunit is found at the monomer-monomer interface and is required for correct PSII assembly and/or dimerization. The chain is Photosystem II reaction center protein L from Cyanidium caldarium (Red alga).